The primary structure comprises 194 residues: MSRVFAYCRVSTLEQTTENQRREIEAAGFAIRPQRLIEEHISGSVAASERPGFIRLLDRMENGDVLIVTKLDRLGRNAMDIRKTVEQLASSDIRVHCLALGGVDLTSAAGRMTMQVISAVAEFERDLLLERTHSGIARAKATGKRFGRPSALNEEQQLTVIARINAGISISAIAREFNTTRQTILRVKAGQQSS.

Residues 3–143 (RVFAYCRVST…SGIARAKATG (141 aa)) enclose the Resolvase/invertase-type recombinase catalytic domain. The active-site O-(5'-phospho-DNA)-serine intermediate is the Ser-11. The H-T-H motif DNA-binding region spans 170-189 (ISAIAREFNTTRQTILRVKA).

The protein belongs to the site-specific recombinase resolvase family.

Resolvase catalyzes the resolution (a site-specific recombination) of the cointegrated replicon to yield the final transposition products. The polypeptide is Transposon Tn2501 resolvase (tnpR) (Escherichia coli).